We begin with the raw amino-acid sequence, 397 residues long: MLRGPWRQLWLFFLLLLPGAPEPRGASRPWEGTDEPGSAWAWPGFQRLQEQLRAAGALSKRYWTLFSCQVWPDDCDEDEEAATGPLGWRLPLLGQRYLDLLTTWYCSFKDCCPRGDCRISNNFTGLEWDLNVRLHGQHLVQQLVLRTVRGYLETPQPEKALALSFHGWSGTGKNFVARMLVENLYRDGLMSDCVRMFIATFHFPHPKYVDLYKEQLMSQIRETQQLCHQTLFIFDEAEKLHPGLLEVLGPHLERRAPEGHRAESPWTIFLFLSNLRGDIINEVVLKLLKAGWSREEITMEHLEPHLQAEIVETIDNGFGHSRLVKENLIDYFIPFLPLEYRHVRLCARDAFLSQELLYKEETLDEIAQMMVYVPKEEQLFSSQGCKSISQRINYFLS.

The first 25 residues, 1-25 (MLRGPWRQLWLFFLLLLPGAPEPRG), serve as a signal peptide directing secretion. An N-linked (GlcNAc...) asparagine glycan is attached at N122. 167–174 (GWSGTGKN) contacts ATP.

This sequence belongs to the ClpA/ClpB family. Torsin subfamily. In terms of assembly, may not form homohexamers. Post-translationally, N-glycosylated. As to expression, ubiquitously expressed. Highest expression in stomach, salivary glands and lymph nodes. Isoform 2 is expressed in placenta.

Its subcellular location is the cytoplasm. It localises to the endoplasmic reticulum lumen. The protein is Torsin-3A (TOR3A) of Homo sapiens (Human).